The chain runs to 553 residues: Transcription factor MYB65 (553 aa).

Positions 1 to 44 (MSYTTATADSDDGMHSSIHNESPAPDSISNGCRSRGKRSVLKKG) are disordered. HTH myb-type domains lie at 38–90 (RSVL…ANHL) and 91–145 (RPNL…KRRQ). DNA-binding regions (H-T-H motif) lie at residues 66–90 (WNAV…ANHL) and 118–141 (WAQM…NTRI).

As to expression, mostly expressed in roots (e.g. root tips), stems, pollen, shoot apices, flowers and floral shoot tips, and, to a lower extent, in leaves and siliques.

The protein resides in the nucleus. In terms of biological role, transcriptional activator of alpha-amylase expression that binds to 5'-CAACTGTC-3' motif in target gene promoter. In vegetative tissues, inhibits growth by reducing cell proliferation. Promotes the expression of aleurone-related genes (e.g. CP1, CP, GASA1, BXL1 and BXL2) in seeds. Together with MYB33 and MYB101, promotes the programmed cell death (PCD) the vacuolation of protein storage vacuoles (PSVs) in the aleurone layers during seed germination. Together with MYB33, facilitates anther and tapetum development. This is Transcription factor MYB65 from Arabidopsis thaliana (Mouse-ear cress).